Reading from the N-terminus, the 307-residue chain is Ornithine carbamoyltransferase (307 aa).

Residues 56 to 59, Q83, R107, and 134 to 137 each bind carbamoyl phosphate; these read STRT and HPCQ. L-ornithine-binding positions include N165, D223, and 227-228; that span reads SM. Carbamoyl phosphate is bound by residues 263-264 and R291; that span reads CL.

Belongs to the aspartate/ornithine carbamoyltransferase superfamily. OTCase family.

Its subcellular location is the cytoplasm. The enzyme catalyses carbamoyl phosphate + L-ornithine = L-citrulline + phosphate + H(+). The protein operates within amino-acid biosynthesis; L-arginine biosynthesis; L-arginine from L-ornithine and carbamoyl phosphate: step 1/3. Reversibly catalyzes the transfer of the carbamoyl group from carbamoyl phosphate (CP) to the N(epsilon) atom of ornithine (ORN) to produce L-citrulline. The polypeptide is Ornithine carbamoyltransferase (Cupriavidus metallidurans (strain ATCC 43123 / DSM 2839 / NBRC 102507 / CH34) (Ralstonia metallidurans)).